Here is a 202-residue protein sequence, read N- to C-terminus: Holliday junction branch migration complex subunit RuvA (202 aa).

Residues 1–65 (MIAYVEGRLA…EDALELYGFA (65 aa)) are domain I. The interval 66-144 (TWDERQTFIV…VEDLPAAAPL (79 aa)) is domain II. A flexible linker region spans residues 145-155 (VTGGAPGGVFR). Positions 155–202 (RDALAGLANLGYGEEEASHVLKDVLHGEPDLDVGGALRAALRALARGR) are domain III.

It belongs to the RuvA family. As to quaternary structure, homotetramer. Forms an RuvA(8)-RuvB(12)-Holliday junction (HJ) complex. HJ DNA is sandwiched between 2 RuvA tetramers; dsDNA enters through RuvA and exits via RuvB. An RuvB hexamer assembles on each DNA strand where it exits the tetramer. Each RuvB hexamer is contacted by two RuvA subunits (via domain III) on 2 adjacent RuvB subunits; this complex drives branch migration. In the full resolvosome a probable DNA-RuvA(4)-RuvB(12)-RuvC(2) complex forms which resolves the HJ.

Its subcellular location is the cytoplasm. Its function is as follows. The RuvA-RuvB-RuvC complex processes Holliday junction (HJ) DNA during genetic recombination and DNA repair, while the RuvA-RuvB complex plays an important role in the rescue of blocked DNA replication forks via replication fork reversal (RFR). RuvA specifically binds to HJ cruciform DNA, conferring on it an open structure. The RuvB hexamer acts as an ATP-dependent pump, pulling dsDNA into and through the RuvAB complex. HJ branch migration allows RuvC to scan DNA until it finds its consensus sequence, where it cleaves and resolves the cruciform DNA. In Nitratidesulfovibrio vulgaris (strain ATCC 29579 / DSM 644 / CCUG 34227 / NCIMB 8303 / VKM B-1760 / Hildenborough) (Desulfovibrio vulgaris), this protein is Holliday junction branch migration complex subunit RuvA.